The chain runs to 292 residues: Cholesterol ring-cleaving hydrolase IpdA subunit (292 aa).

The protein belongs to the 3-oxoacid CoA-transferase subunit A family. In terms of assembly, heterotetramer composed of 2 IpdA subunits and 2 IpdB subunits.

It catalyses the reaction (3E)-2-(2-carboxylatoethyl)-3-methyl-6-oxocyclohex-1-ene-1-carboxyl-CoA + H2O = 6-methyl-3,7-dioxodecanedioyl-CoA. The protein operates within steroid metabolism; cholesterol degradation. Involved in the final steps of cholesterol and steroid degradation. Opens the last steroid ring of cholesterol by catalyzing the hydrolysis of (3E)-2-(2-carboxylatoethyl)-3-methyl-6-oxocyclohex-1-ene-1-carboxyl-CoA (COCHEA-CoA) to 6-methyl-3,7-dioxodecanedioyl-CoA (MeDODA-CoA). The polypeptide is Cholesterol ring-cleaving hydrolase IpdA subunit (Mycobacterium tuberculosis (strain CDC 1551 / Oshkosh)).